A 279-amino-acid polypeptide reads, in one-letter code: MPTDGSYFHLHLVSDSTGETLITVSRAVSAQYANVSPVEHVYPLVRSQKQLDRVLAEIEEAPGIVLFTLLEQDLVERLEKKCQDINIPSLSIIGPVMQLFQAYLGSSTTGRVGAQHTLNAEYFKRIDALNYSMMHDDGQHAEGLEEADVVLVGVSRTSKTPTSIYLANRGIRTANVPLVPGIPIPHQLESLVKPLVVSLHATPERLIQVRQNRLLSIGAAIGNEDYIDRQTVTDEVSYARRLSAKYGWALLEVTRRSIEETAAAVMKLLADRQRQRPVE.

153–160 serves as a coordination point for ADP; that stretch reads GVSRTSKT.

The protein belongs to the pyruvate, phosphate/water dikinase regulatory protein family. PDRP subfamily.

It catalyses the reaction N(tele)-phospho-L-histidyl/L-threonyl-[pyruvate, phosphate dikinase] + ADP = N(tele)-phospho-L-histidyl/O-phospho-L-threonyl-[pyruvate, phosphate dikinase] + AMP + H(+). The catalysed reaction is N(tele)-phospho-L-histidyl/O-phospho-L-threonyl-[pyruvate, phosphate dikinase] + phosphate + H(+) = N(tele)-phospho-L-histidyl/L-threonyl-[pyruvate, phosphate dikinase] + diphosphate. In terms of biological role, bifunctional serine/threonine kinase and phosphorylase involved in the regulation of the pyruvate, phosphate dikinase (PPDK) by catalyzing its phosphorylation/dephosphorylation. This chain is Putative pyruvate, phosphate dikinase regulatory protein, found in Rhodopseudomonas palustris (strain BisA53).